The chain runs to 553 residues: Protein PNS1 (553 aa).

Residues 1–53 are disordered; it reads MFGEGNKPTEPVPAYDAGQDPFQGPNASKNQYQGSAADYNGAPPPPASQPGNQ. Residues 1-94 lie on the Cytoplasmic side of the membrane; it reads MFGEGNKPTE…EDSKPKWNDW (94 aa). Polar residues predominate over residues 25–34; sequence PNASKNQYQG. A helical membrane pass occupies residues 95-115; sequence PFTIFFAGCVIAFIVVAAITL. At 116-142 the chain is on the extracellular side; that stretch reads RAWSQNSSSQGSGVYDGANTGTLTTNS. N-linked (GlcNAc...) asparagine glycosylation is present at asparagine 121. The chain crosses the membrane as a helical span at residues 143–163; the sequence is AIMLAISCIIAFVFSIIGIVL. Residues 164–169 are Cytoplasmic-facing; sequence ARMFPK. Residues 170–190 traverse the membrane as a helical segment; it reads FFIIAGILFNIIAGLATAIMY. Over 191–192 the chain is Extracellular; sequence LS. Residues 193–213 form a helical membrane-spanning segment; it reads LKYYSAGIVFLVFTAICALFY. At 214-241 the chain is on the cytoplasmic side; the sequence is WRMRHRIPFTVAVLKTVMDVMKSYPQTW. The chain crosses the membrane as a helical span at residues 242-262; it reads FVTLIGSIIATAFSILFSAVI. At 263–287 the chain is on the extracellular side; sequence VATYMKYDDKANNPGCSTNGGSCSN. Residues 288 to 308 form a helical membrane-spanning segment; that stretch reads AKLIGLLVLVFFCGYYIAEVI. Residues 309 to 349 lie on the Cytoplasmic side of the membrane; that stretch reads RNVIHCTVSGIFGAWYYFSKSDQGMPKWPGFGALKRSLTYS. The helical transmembrane segment at 350-370 threads the bilayer; sequence FGSICFGSLIVTIIETLKAVL. Topologically, residues 371–385 are extracellular; it reads RLAVDGVMGGGGADN. Residues 386–406 traverse the membrane as a helical segment; that stretch reads GWMQCLALIANWIFSFLEWLA. Over 407 to 450 the chain is Cytoplasmic; the sequence is RYFNHYAYVFIALYGKPYLRAAKETWYMLREKGIDALINDNLVN. A helical transmembrane segment spans residues 451–471; that stretch reads VALSFFTLFTCYITTLFAYLY. Residues 472 to 484 lie on the Extracellular side of the membrane; the sequence is LRYTDPNYNDNNN. A helical membrane pass occupies residues 485–505; sequence FTPALMAFAFVIAMEICNVIT. The Cytoplasmic portion of the chain corresponds to 506 to 553; sequence ETIRSGTATFFVALGNDPEVFHLSYPERFDEIFRAYPEVLKKLSHQNV.

It belongs to the CTL (choline transporter-like) family.

It localises to the cell membrane. In terms of biological role, probably involved in transport through the plasma membrane. The protein is Protein PNS1 (PNS1) of Kluyveromyces lactis (strain ATCC 8585 / CBS 2359 / DSM 70799 / NBRC 1267 / NRRL Y-1140 / WM37) (Yeast).